The sequence spans 206 residues: Holliday junction branch migration complex subunit RuvA (206 aa).

Positions 1–64 are domain I; it reads MIGKLKGVLD…EDMIRLYGFR (64 aa). Residues 65–144 form a domain II region; that stretch reads TVLEREWFRL…AFAGEAAGAI (80 aa). A flexible linker region spans residues 145–154; sequence GLKQDLGEGV. A domain III region spans residues 154–206; that stretch reads VAPAPVSDAVSALANLGYSRDIAANAVAAALKSAGEGADTGTLIRLGLKELAR.

Belongs to the RuvA family. As to quaternary structure, homotetramer. Forms an RuvA(8)-RuvB(12)-Holliday junction (HJ) complex. HJ DNA is sandwiched between 2 RuvA tetramers; dsDNA enters through RuvA and exits via RuvB. An RuvB hexamer assembles on each DNA strand where it exits the tetramer. Each RuvB hexamer is contacted by two RuvA subunits (via domain III) on 2 adjacent RuvB subunits; this complex drives branch migration. In the full resolvosome a probable DNA-RuvA(4)-RuvB(12)-RuvC(2) complex forms which resolves the HJ.

It is found in the cytoplasm. The RuvA-RuvB-RuvC complex processes Holliday junction (HJ) DNA during genetic recombination and DNA repair, while the RuvA-RuvB complex plays an important role in the rescue of blocked DNA replication forks via replication fork reversal (RFR). RuvA specifically binds to HJ cruciform DNA, conferring on it an open structure. The RuvB hexamer acts as an ATP-dependent pump, pulling dsDNA into and through the RuvAB complex. HJ branch migration allows RuvC to scan DNA until it finds its consensus sequence, where it cleaves and resolves the cruciform DNA. The polypeptide is Holliday junction branch migration complex subunit RuvA (Chelativorans sp. (strain BNC1)).